The following is a 2637-amino-acid chain: Nonribisomal peptide synthetase valB (2637 aa).

The tract at residues 1 to 376 (MADGADYTQR…KALIRSPPST (376 aa)) is condensation 1. The tract at residues 413 to 803 (SQASRRPDAA…VGRRDNQIKL (391 aa)) is adenylation 1. In terms of domain architecture, Carrier 1 spans 946–1022 (PPANPPERAL…EAASEIKEPT (77 aa)). Ser983 is modified (O-(pantetheine 4'-phosphoryl)serine). The disordered stretch occupies residues 1016–1045 (SEIKEPTDASAPSPSPISRDLPLQKSNHDR). Residues 1063 to 1506 (VEAIYPCTAL…LSRADMSLLQ (444 aa)) form a condensation 2 region. Residues 1524–1933 (AREVAHQRPL…EGRKDTRVKL (410 aa)) form an adenylation 2 region. The Carrier 2 domain maps to 2078-2154 (KEVTDDQAFM…YMVSKTSVSN (77 aa)). Ser2115 carries the post-translational modification O-(pantetheine 4'-phosphoryl)serine. The condensation 3 stretch occupies residues 2193-2582 (ESVAPATDAQ…LWMGAYLDAA (390 aa)).

This sequence belongs to the NRP synthetase family.

The protein operates within secondary metabolite biosynthesis. Its function is as follows. Nonribisomal peptide synthetase; part of the gene cluster that mediates the biosynthesis of valactamides. The first step of the pathway is performed by the highly reducing polyketide synthase valA that produces the polyketide part of the final products. An acetyl starter unit is incorporated by the ketosynthase domain of valA, and subsequently 6 malonyl-CoA-derived ketide units are incorporated and fully reduced to their respective alkane forms by the action of the ketoreductase, dehydratase, and enoylreductase domains (except for the penultimate unit, which is reduced only to the alkene). The final five ketide units are each proposed to be alpha-methylated by the methyltransferase domain before ketone reduction by the ketoreductase domain. The C1 domain of the nonribisomal peptide synthetase valB then catalyzes amide bond formation between the heptaketide chain and L-valine (L-Val) attached to the T1 domain. The C2 domain incorporating L-isoleucine (L-Ile) then carries out chain elongation, which is followed by macrolactonization by the Ct domain to release the final product. The polypeptide is Nonribisomal peptide synthetase valB (Aspergillus terreus).